The chain runs to 264 residues: Acyl-[acyl-carrier-protein]--UDP-N-acetylglucosamine O-acyltransferase (264 aa).

Belongs to the transferase hexapeptide repeat family. LpxA subfamily. In terms of assembly, homotrimer.

It localises to the cytoplasm. It carries out the reaction a (3R)-hydroxyacyl-[ACP] + UDP-N-acetyl-alpha-D-glucosamine = a UDP-3-O-[(3R)-3-hydroxyacyl]-N-acetyl-alpha-D-glucosamine + holo-[ACP]. It functions in the pathway glycolipid biosynthesis; lipid IV(A) biosynthesis; lipid IV(A) from (3R)-3-hydroxytetradecanoyl-[acyl-carrier-protein] and UDP-N-acetyl-alpha-D-glucosamine: step 1/6. In terms of biological role, involved in the biosynthesis of lipid A, a phosphorylated glycolipid that anchors the lipopolysaccharide to the outer membrane of the cell. The polypeptide is Acyl-[acyl-carrier-protein]--UDP-N-acetylglucosamine O-acyltransferase (Leptothrix cholodnii (strain ATCC 51168 / LMG 8142 / SP-6) (Leptothrix discophora (strain SP-6))).